We begin with the raw amino-acid sequence, 271 residues long: PA-phosphatase related-family protein DDB_G0284367 (271 aa).

The next 6 helical transmembrane spans lie at F23–F43, I68–G88, A102–V122, F150–C170, G181–V201, and F211–M231.

Belongs to the PA-phosphatase related phosphoesterase family.

The protein resides in the membrane. The chain is PA-phosphatase related-family protein DDB_G0284367 from Dictyostelium discoideum (Social amoeba).